Reading from the N-terminus, the 642-residue chain is tRNA uridine 5-carboxymethylaminomethyl modification enzyme MnmG (642 aa).

FAD is bound by residues glycine 12–glycine 17, valine 124, and serine 179. Glycine 272 to phenylalanine 286 is a binding site for NAD(+). Glutamine 369 contributes to the FAD binding site.

It belongs to the MnmG family. Homodimer. Heterotetramer of two MnmE and two MnmG subunits. Requires FAD as cofactor.

The protein resides in the cytoplasm. NAD-binding protein involved in the addition of a carboxymethylaminomethyl (cmnm) group at the wobble position (U34) of certain tRNAs, forming tRNA-cmnm(5)s(2)U34. In Bdellovibrio bacteriovorus (strain ATCC 15356 / DSM 50701 / NCIMB 9529 / HD100), this protein is tRNA uridine 5-carboxymethylaminomethyl modification enzyme MnmG.